Consider the following 642-residue polypeptide: Hemagglutinin-esterase-fusion glycoprotein (642 aa).

Ala1 is a signal peptide. Residues 2–27 are fusion domain-1; that stretch reads EKIKICLQKQVNSSFSLHNGFGGNLY. Residues 2 to 617 are Extracellular-facing; the sequence is EKIKICLQKQ…QSDPFYWGSS (616 aa). 7 disulfide bridges follow: Cys7–Cys570, Cys107–Cys152, Cys127–Cys175, Cys197–Cys239, Cys216–Cys303, Cys224–Cys276, and Cys333–Cys339. N-linked (GlcNAc...) asparagine; by host glycosylation is found at Asn13 and Asn48. The tract at residues 28-138 is esterase domain-1; that stretch reads ATEEKRMFEL…RKNWTDIKLN (111 aa). The active-site Nucleophile is Ser58. The N-linked (GlcNAc...) asparagine; by host glycan is linked to Asn131. Residues 138–297 are N-acetyl-9-O-acetylneuraminic acid binding; it reads NFQKSIYELA…VRSSPRFLLM (160 aa). An esterase domain-2 region spans residues 298–352; that stretch reads PERSYCFDMKEKGLVTAVQSIWGKGRKSDYAVDQACLSTPGCMLIQKQKPYIGEA. Residues Asp353 and His356 each act as charge relay system in the active site. The tract at residues 353 to 638 is fusion domain-2; sequence DDHHGDQEMR…AALVISGIAI (286 aa). Asn382 is a glycosylation site (N-linked (GlcNAc...) asparagine; by host). A helical membrane pass occupies residues 618 to 638; sequence LGLAITTPISLAALVISGIAI. Residues 639 to 642 are Cytoplasmic-facing; it reads CRTK.

It belongs to the influenza type C/coronaviruses hemagglutinin-esterase family. Homotrimer of disulfide-linked HEF1-HEF2. Post-translationally, in natural infection, inactive HEF is matured into HEF1 and HEF2 outside the cell by one or more trypsin-like, arginine-specific endoprotease.

The protein localises to the virion membrane. It localises to the host cell membrane. It carries out the reaction N-acetyl-9-O-acetylneuraminate + H2O = N-acetylneuraminate + acetate + H(+). The enzyme catalyses N-acetyl-4-O-acetylneuraminate + H2O = N-acetylneuraminate + acetate + H(+). Its function is as follows. Binds to the N-acetyl-9-O-acetylneuraminic acid residues on the cell surface, bringing about the attachment of the virus particle to the cell. Plays a major role in the determination of host range restriction and virulence. Class I viral fusion protein. Responsible for penetration of the virus into the cell cytoplasm by mediating the fusion of the membrane of the endocytosed virus particle with the endosomal membrane. Low pH in endosomes induce an irreversible conformational change in HEF2, releasing the fusion hydrophobic peptide. Several trimers are required to form a competent fusion pore. Displays a receptor-destroying activity which is a neuraminidate-O-acetyl esterase. This activity cleaves off any receptor on the cell surface, which would otherwise prevent virions release. These cleavages prevent self-aggregation and ensure the efficient spread of the progeny virus from cell to cell. This chain is Hemagglutinin-esterase-fusion glycoprotein (HE), found in Influenza C virus (strain C/England/892/1983).